The primary structure comprises 387 residues: Transmembrane protein 120 homolog (387 aa).

The stretch at 1–39 (MNIDSLKNEWEELNKEFAELESCNRRYIELLEQLHSHQQ) forms a coiled coil. The N-linked (GlcNAc...) asparagine glycan is linked to Asn-111. 6 helical membrane-spanning segments follow: residues 130 to 150 (FKLI…IFNY), 155 to 175 (LAFI…ESIL), 191 to 211 (FIST…HWQI), 216 to 238 (FMYF…KGLL), 264 to 284 (GLSF…YNAW), and 302 to 322 (VMSG…LWVV). A disordered region spans residues 346–387 (RKEMKNSASDLDLSSGSKLSPTATTTTSIATATQTPAEKKET). 3 positions are modified to phosphoserine: Ser-352, Ser-354, and Ser-365. The span at 352 to 381 (SASDLDLSSGSKLSPTATTTTSIATATQTP) shows a compositional bias: low complexity.

It belongs to the TMEM120 family.

Its subcellular location is the membrane. The chain is Transmembrane protein 120 homolog from Drosophila melanogaster (Fruit fly).